The following is a 265-amino-acid chain: Iron(3+)-hydroxamate import ATP-binding protein FhuC (265 aa).

The 237-residue stretch at 12 to 248 folds into the ABC transporter domain; the sequence is FALRNISFRV…ETLEMIYGIP (237 aa). Residues 44-51 and 168-179 contribute to the ATP site; these read GHNGSGKS and CLLLDEPTSALD.

This sequence belongs to the ABC transporter superfamily. Iron (Fe3+)-hydroxamate importer (TC 3.A.1.14.7) family. As to quaternary structure, the complex is composed of two ATP-binding proteins (FhuC), a transmembrane protein (FhuB) and a solute-binding protein (FhuD). FhuC interacts with FhuB.

It localises to the cell inner membrane. The enzyme catalyses ATP + H2O + Fe(3+)-hydroxamate complex-[hydroxamate-binding protein]Side 1 = ADP + phosphate + Fe(3+)-hydroxamate complexSide 2 + [hydroxamate-binding protein]Side 1.. ATPase activity is inhibited by vanadate. Functionally, part of the ABC transporter complex FhuCDB involved in iron(3+)-hydroxamate import. Responsible for energy coupling to the transport system. The sequence is that of Iron(3+)-hydroxamate import ATP-binding protein FhuC (fhuC) from Escherichia coli (strain K12).